The primary structure comprises 185 residues: Large ribosomal subunit protein uL6 (185 aa).

It belongs to the universal ribosomal protein uL6 family. Part of the 50S ribosomal subunit.

In terms of biological role, this protein binds to the 23S rRNA, and is important in its secondary structure. It is located near the subunit interface in the base of the L7/L12 stalk, and near the tRNA binding site of the peptidyltransferase center. The sequence is that of Large ribosomal subunit protein uL6 from Deinococcus deserti (strain DSM 17065 / CIP 109153 / LMG 22923 / VCD115).